The following is a 65-amino-acid chain: Large ribosomal subunit protein bL35 (65 aa).

It belongs to the bacterial ribosomal protein bL35 family.

The polypeptide is Large ribosomal subunit protein bL35 (Aromatoleum aromaticum (strain DSM 19018 / LMG 30748 / EbN1) (Azoarcus sp. (strain EbN1))).